Reading from the N-terminus, the 446-residue chain is Beta-glucosidase A (446 aa).

Catalysis depends on glutamate 166, which acts as the Proton donor. The active-site Nucleophile is the glutamate 351.

The protein belongs to the glycosyl hydrolase 1 family.

The catalysed reaction is Hydrolysis of terminal, non-reducing beta-D-glucosyl residues with release of beta-D-glucose.. The protein operates within glycan metabolism; cellulose degradation. This chain is Beta-glucosidase A (bglA), found in Thermotoga maritima (strain ATCC 43589 / DSM 3109 / JCM 10099 / NBRC 100826 / MSB8).